The following is a 402-amino-acid chain: D-galactonate dehydratase family member RspA (402 aa).

Substrate contacts are provided by Asn-37 and His-122. The active-site Proton donor/acceptor is the Tyr-159. Asp-210 contributes to the Mg(2+) binding site. The Proton donor/acceptor role is filled by His-212. Residues Glu-236 and Glu-262 each coordinate Mg(2+). Substrate is bound by residues Glu-262, Arg-283, His-312, Asp-316, and Glu-339.

Belongs to the mandelate racemase/muconate lactonizing enzyme family. GalD subfamily. Requires Mg(2+) as cofactor.

The enzyme catalyses D-mannonate = 2-dehydro-3-deoxy-D-gluconate + H2O. Functionally, has low D-mannonate dehydratase activity (in vitro), suggesting that this is not a physiological substrate and that it has no significant role in D-mannonate degradation in vivo. Has no detectable activity with a panel of 70 other acid sugars (in vitro). This Cellvibrio japonicus (strain Ueda107) (Pseudomonas fluorescens subsp. cellulosa) protein is D-galactonate dehydratase family member RspA (rspA).